Reading from the N-terminus, the 957-residue chain is Bifunctional glutamine synthetase adenylyltransferase/adenylyl-removing enzyme (957 aa).

Residues 1-449 form an adenylyl removase region; it reads MTQHLERPEL…VFDDIIGTDE (449 aa). The interval 457 to 957 is adenylyl transferase; it reads SEQYNEMWTM…QEYLVPSSDE (501 aa).

The protein belongs to the GlnE family. Mg(2+) is required as a cofactor.

It catalyses the reaction [glutamine synthetase]-O(4)-(5'-adenylyl)-L-tyrosine + phosphate = [glutamine synthetase]-L-tyrosine + ADP. The catalysed reaction is [glutamine synthetase]-L-tyrosine + ATP = [glutamine synthetase]-O(4)-(5'-adenylyl)-L-tyrosine + diphosphate. Functionally, involved in the regulation of glutamine synthetase GlnA, a key enzyme in the process to assimilate ammonia. When cellular nitrogen levels are high, the C-terminal adenylyl transferase (AT) inactivates GlnA by covalent transfer of an adenylyl group from ATP to specific tyrosine residue of GlnA, thus reducing its activity. Conversely, when nitrogen levels are low, the N-terminal adenylyl removase (AR) activates GlnA by removing the adenylyl group by phosphorolysis, increasing its activity. The regulatory region of GlnE binds the signal transduction protein PII (GlnB) which indicates the nitrogen status of the cell. The chain is Bifunctional glutamine synthetase adenylyltransferase/adenylyl-removing enzyme from Photobacterium profundum (strain SS9).